We begin with the raw amino-acid sequence, 810 residues long: RING finger protein unkempt homolog (810 aa).

The tract at residues 1-24 is disordered; sequence MSKGPGPGGSAASSAPPAATAQVL. The span at 10–19 shows a compositional bias: low complexity; that stretch reads SAASSAPPAA. C3H1-type zinc fingers lie at residues 84–113, 124–154, 215–241, 251–285, and 293–321; these read YSPD…HRTT, YYKT…HGPH, NYKT…HNSK, KYRS…HTRT, and IYKS…HVEQ. A disordered region spans residues 239–265; sequence NSKDRRRSPRKHKYRSSPCPNVKHGDE. Position 240 is a phosphoserine (serine 240). Residues 241–253 show a composition bias toward basic residues; sequence KDRRRSPRKHKYR. The disordered stretch occupies residues 324-343; it reads LSDDLQPSSAVSSPTQPGPV. Positions 328–338 are enriched in polar residues; the sequence is LQPSSAVSSPT. Phosphoserine occurs at positions 374, 378, 385, and 631. Positions 643 to 723 form a coiled coil; sequence GAAELARLRQ…QEELERLHAG (81 aa). An RING-type; degenerate zinc finger spans residues 766-801; the sequence is SVKCLKCQEQKRAVLPCQHAALCELCAEGSECPICQ.

It belongs to the unkempt family.

It localises to the cytoplasm. Sequence-specific RNA-binding protein which plays an important role in the establishment and maintenance of the early morphology of cortical neurons during embryonic development. Acts as a translation repressor and controls a translationally regulated cell morphology program to ensure proper structuring of the nervous system. Translational control depends on recognition of its binding element within target mRNAs which consists of a mandatory UAG trimer upstream of a U/A-rich motif. Associated with polysomes. The chain is RING finger protein unkempt homolog (UNK) from Homo sapiens (Human).